Reading from the N-terminus, the 376-residue chain is Succinate--CoA ligase [ADP-forming] subunit beta (376 aa).

One can recognise an ATP-grasp domain in the interval 9 to 237 (KEIFSKYGIP…PTEEEKVEAD (229 aa)). ATP is bound by residues K46, 53–55 (GRG), V95, and E100. Mg(2+) contacts are provided by N192 and D206. Substrate is bound by residues N257 and 314–316 (GIT).

This sequence belongs to the succinate/malate CoA ligase beta subunit family. As to quaternary structure, heterotetramer of two alpha and two beta subunits. Requires Mg(2+) as cofactor.

The enzyme catalyses succinate + ATP + CoA = succinyl-CoA + ADP + phosphate. The catalysed reaction is GTP + succinate + CoA = succinyl-CoA + GDP + phosphate. It participates in carbohydrate metabolism; tricarboxylic acid cycle; succinate from succinyl-CoA (ligase route): step 1/1. In terms of biological role, succinyl-CoA synthetase functions in the citric acid cycle (TCA), coupling the hydrolysis of succinyl-CoA to the synthesis of either ATP or GTP and thus represents the only step of substrate-level phosphorylation in the TCA. The beta subunit provides nucleotide specificity of the enzyme and binds the substrate succinate, while the binding sites for coenzyme A and phosphate are found in the alpha subunit. In Bacteroides thetaiotaomicron (strain ATCC 29148 / DSM 2079 / JCM 5827 / CCUG 10774 / NCTC 10582 / VPI-5482 / E50), this protein is Succinate--CoA ligase [ADP-forming] subunit beta.